Reading from the N-terminus, the 547-residue chain is Chaperonin GroEL 2 (547 aa).

ATP-binding positions include 30-33 (TLGP), lysine 51, 87-91 (DGTTT), glycine 415, 479-481 (NAA), and aspartate 495. The segment at 528–547 (KPATAGLPHGGPGGFGGPEF) is disordered. Over residues 535-547 (PHGGPGGFGGPEF) the composition is skewed to gly residues.

This sequence belongs to the chaperonin (HSP60) family. In terms of assembly, forms a cylinder of 14 subunits composed of two heptameric rings stacked back-to-back. Interacts with the co-chaperonin GroES.

Its subcellular location is the cytoplasm. The catalysed reaction is ATP + H2O + a folded polypeptide = ADP + phosphate + an unfolded polypeptide.. Functionally, together with its co-chaperonin GroES, plays an essential role in assisting protein folding. The GroEL-GroES system forms a nano-cage that allows encapsulation of the non-native substrate proteins and provides a physical environment optimized to promote and accelerate protein folding. This is Chaperonin GroEL 2 from Azoarcus sp. (strain BH72).